The chain runs to 824 residues: Mucosa-associated lymphoid tissue lymphoma translocation protein 1 (824 aa).

Positions 1-27 (MSLLGDPLQALPPSAAPTGPLLAPPAG) are disordered. Serine 2 bears the N-acetylserine mark. The span at 11–27 (LPPSAAPTGPLLAPPAG) shows a compositional bias: low complexity. Residues 39-126 (RRLSELLDQA…EVLQLLSPPG (88 aa)) form the Death domain. 2 Ig-like C2-type domains span residues 125 to 201 (PGIK…FEFS) and 212 to 305 (PESF…KKVE). The residue at position 135 (serine 135) is a Phosphoserine. 2 disulfide bridges follow: cysteine 147–cysteine 190 and cysteine 248–cysteine 290. A caspase-like region spans residues 348-562 (IGNMNYREHP…SLSEKRALTD (215 aa)). The short motif at 369–376 (LTNLLRQL) is the Nuclear export signal element. Residues histidine 415 and cysteine 464 contribute to the active site.

It belongs to the peptidase C14B family. As to quaternary structure, homooligomer; forms oligomers which bind to TRAF6. Forms a complex with CARD14 and MALT1; resulting in the formation of a CBM (CARD14-BCL10-MALT1) complex. Forms a complex with CARD11 and MALT1; resulting in the formation of a CBM (CARD11-BCL10-MALT1) complex. Forms a complex with CARD9 and MALT1; resulting in the formation of a CBM (CARD9-BCL10-MALT1) complex. Highly expressed in peripheral blood mononuclear cells. Detected at lower levels in bone marrow, thymus and lymph node, and at very low levels in colon and lung.

The protein localises to the cytoplasm. Its subcellular location is the perinuclear region. The protein resides in the nucleus. In terms of biological role, protease that enhances BCL10-induced activation: acts via formation of CBM complexes that channel adaptive and innate immune signaling downstream of CARD domain-containing proteins (CARD9, CARD11 and CARD14) to activate NF-kappa-B and MAP kinase p38 pathways which stimulate expression of genes encoding pro-inflammatory cytokines and chemokines. Mediates BCL10 cleavage: MALT1-dependent BCL10 cleavage plays an important role in T-cell antigen receptor-induced integrin adhesion. Involved in the induction of T helper 17 cells (Th17) differentiation. Cleaves RC3H1 and ZC3H12A in response to T-cell receptor (TCR) stimulation which releases their cooperatively repressed targets to promote Th17 cell differentiation. Also mediates cleavage of N4BP1 in T-cells following TCR-mediated activation, leading to N4BP1 inactivation. May also have ubiquitin ligase activity: binds to TRAF6, inducing TRAF6 oligomerization and activation of its ligase activity. This Homo sapiens (Human) protein is Mucosa-associated lymphoid tissue lymphoma translocation protein 1.